We begin with the raw amino-acid sequence, 157 residues long: MPELFAYTDGACSGNPGPGGWGALLIARDGDTVVKERALKGGEAETTNNRMELLAAIHALEALERPARLTVVTDSAYVKGGVTGWIHGWKRNGWKTSTKKPVKNEDLWRRLDAAQARHEVQWEWVKGHAGHPENERADALAREGMAPFKPGKSKAGR.

Residues M1–A146 enclose the RNase H type-1 domain. Residues D9, E52, D74, and D138 each contribute to the Mg(2+) site.

Belongs to the RNase H family. Monomer. Requires Mg(2+) as cofactor.

The protein localises to the cytoplasm. The catalysed reaction is Endonucleolytic cleavage to 5'-phosphomonoester.. Its function is as follows. Endonuclease that specifically degrades the RNA of RNA-DNA hybrids. The protein is Ribonuclease H of Dinoroseobacter shibae (strain DSM 16493 / NCIMB 14021 / DFL 12).